The sequence spans 93 residues: uncharacterized protein (93 aa).

Positions 24–85 constitute a TRAM domain; the sequence is QLQVGDTLKL…IQTQVGRLFF (62 aa).

The protein belongs to the ycf81 family.

This is an uncharacterized protein from Thermus thermophilus.